The chain runs to 318 residues: MNVDLESLAEATSGAIGSLISTTILYPLDTCKTKYQAEARSSGRTKYRNLTDVLLEAISNRQVLSLYQGLGTKNLQSFISQFVYFYGYSYFKRLYLEKSGYKSIGTKANLVIAAAAGACTAIATQPLDTASSRMQTSEFGKSKGLLKTLTEGNWSDAFDGLSISLLLTSNPAIQYTVFDQLKQRALKNKQDNADKGTSPASLSAFMAFLLGAISKSIATCLTYPAIRCKVIIQAADSAEETSKTKIKSQKTVLSVLYGIWKREGILGYFKGLHAQILKTVLSSALLLMIKEKISASTWVLILALKRYLLLPRGKVKNL.

3 Solcar repeats span residues 5 to 94 (LESL…FKRL), 104 to 184 (IGTK…LKQR), and 202 to 296 (LSAF…ISAS). Helical transmembrane passes span 8–28 (LAEA…LYPL), 104–124 (IGTK…AIAT), 158–178 (FDGL…YTVF), 201–221 (SLSA…ATCL), 252–272 (VLSV…FKGL), and 284–304 (ALLL…ILAL).

This sequence belongs to the mitochondrial carrier (TC 2.A.29) family.

The protein localises to the peroxisome membrane. Peroxisomal adenine nucleotide transporter catalyzing the counterexchange of ATP with AMP. ATP is needed by reactions that generate acyl-CoA for peroxisomal fatty acid beta-oxidation during postgerminative growth. Required for the conversion of seed-reserved triacylglycerols into sucrose that is necessary for growth before the onset of photosynthesis. The polypeptide is Peroxisomal adenine nucleotide carrier 1 (PNC1) (Glycine max (Soybean)).